A 161-amino-acid polypeptide reads, in one-letter code: Crossover junction endodeoxyribonuclease RuvC (161 aa).

Residues aspartate 8, glutamate 67, and aspartate 139 contribute to the active site. Mg(2+) contacts are provided by aspartate 8, glutamate 67, and aspartate 139.

Belongs to the RuvC family. As to quaternary structure, homodimer which binds Holliday junction (HJ) DNA. The HJ becomes 2-fold symmetrical on binding to RuvC with unstacked arms; it has a different conformation from HJ DNA in complex with RuvA. In the full resolvosome a probable DNA-RuvA(4)-RuvB(12)-RuvC(2) complex forms which resolves the HJ. Mg(2+) serves as cofactor.

Its subcellular location is the cytoplasm. It catalyses the reaction Endonucleolytic cleavage at a junction such as a reciprocal single-stranded crossover between two homologous DNA duplexes (Holliday junction).. Its function is as follows. The RuvA-RuvB-RuvC complex processes Holliday junction (HJ) DNA during genetic recombination and DNA repair. Endonuclease that resolves HJ intermediates. Cleaves cruciform DNA by making single-stranded nicks across the HJ at symmetrical positions within the homologous arms, yielding a 5'-phosphate and a 3'-hydroxyl group; requires a central core of homology in the junction. The consensus cleavage sequence is 5'-(A/T)TT(C/G)-3'. Cleavage occurs on the 3'-side of the TT dinucleotide at the point of strand exchange. HJ branch migration catalyzed by RuvA-RuvB allows RuvC to scan DNA until it finds its consensus sequence, where it cleaves and resolves the cruciform DNA. This chain is Crossover junction endodeoxyribonuclease RuvC, found in Wigglesworthia glossinidia brevipalpis.